The chain runs to 136 residues: Histone H3.3C (136 aa).

Residues 1-10 (MARTKQTACK) are compositionally biased toward polar residues. Residues 1–39 (MARTKQTACKSTGRKAPRKQLATKAAHKSAPAMGGVKKP) are disordered. The residue at position 3 (Arg3) is an Asymmetric dimethylarginine; by PRMT6. Residue Thr4 is modified to Phosphothreonine; by HASPIN. The residue at position 5 (Lys5) is an Allysine; alternate. N6,N6,N6-trimethyllysine; alternate is present on Lys5. Lys5 carries the post-translational modification N6,N6-dimethyllysine; alternate. Lys5 carries the post-translational modification N6-(2-hydroxyisobutyryl)lysine; alternate. Lys5 is modified (N6-acetyllysine; alternate). The residue at position 5 (Lys5) is an N6-methyllysine; alternate. Gln6 carries the 5-glutamyl dopamine; alternate modification. At Gln6 the chain carries 5-glutamyl serotonin; alternate. Thr7 is subject to Phosphothreonine; by PKC. Residue Lys10 is modified to N6-(2-hydroxyisobutyryl)lysine; alternate. At Lys10 the chain carries N6-lactoyllysine; alternate. Lys10 bears the N6-methylated lysine mark. ADP-ribosylserine; alternate is present on Ser11. The residue at position 11 (Ser11) is a Phosphoserine; alternate; by AURKB, AURKC, RPS6KA3, RPS6KA4 and RPS6KA5. A Phosphothreonine; by PKC modification is found at Thr12. Lys15 carries the N6-(2-hydroxyisobutyryl)lysine; alternate modification. The residue at position 15 (Lys15) is an N6-lactoyllysine; alternate. Residue Lys15 is modified to N6-acetyllysine. At Lys15 the chain carries N6-glutaryllysine; alternate. Arg18 carries the post-translational modification Asymmetric dimethylarginine. N6-(2-hydroxyisobutyryl)lysine; alternate is present on residues Lys19, Lys24, and Lys28. Lys19 carries the post-translational modification N6-acetyllysine; alternate. Lys19, Lys24, and Lys28 each carry N6-lactoyllysine; alternate. Lys19, Lys24, and Lys28 each carry N6-glutaryllysine; alternate. 2 positions are modified to N6-butyryllysine; alternate: Lys19 and Lys24. N6-methylated lysine; alternate is present on Lys19. N6-acetyllysine is present on Lys24. At Lys28 the chain carries N6-acetyllysine; alternate. An N6-methylated lysine; alternate modification is found at Lys28. Ser29 bears the ADP-ribosylserine; alternate mark. Ser29 carries the phosphoserine; alternate; by AURKB, AURKC and RPS6KA5 modification. Residue Lys37 is modified to N6-(2-hydroxyisobutyryl)lysine; alternate. An N6-acetyllysine; alternate modification is found at Lys37. The residue at position 37 (Lys37) is an N6-methylated lysine; alternate. Residue Tyr42 is modified to Phosphotyrosine. An N6-(2-hydroxyisobutyryl)lysine; alternate modification is found at Lys57. The residue at position 57 (Lys57) is an N6-lactoyllysine; alternate. The residue at position 57 (Lys57) is an N6-glutaryllysine; alternate. Residue Lys57 is modified to N6-succinyllysine; alternate. Phosphoserine is present on Ser58. Residues Lys65 and Lys80 each carry the N6-(2-hydroxyisobutyryl)lysine; alternate modification. Residues Lys65 and Lys80 each carry the N6-methylated lysine modification. Lys80 carries the N6-lactoyllysine; alternate modification. An N6-glutaryllysine; alternate modification is found at Lys80. Residue Lys80 is modified to N6-succinyllysine; alternate. At Thr81 the chain carries Phosphothreonine. Residues Lys116 and Lys123 each carry the N6-acetyllysine; alternate modification. N6-glutaryllysine; alternate is present on residues Lys116 and Lys123. Lys123 bears the N6-(2-hydroxyisobutyryl)lysine; alternate mark. N6-methylated lysine; alternate is present on Lys123. Lys123 bears the N6-succinyllysine; alternate mark.

This sequence belongs to the histone H3 family. The nucleosome is a histone octamer containing two molecules each of H2A, H2B, H3 and H4 assembled in one H3-H4 heterotetramer and two H2A-H2B heterodimers. The octamer wraps approximately 147 bp of DNA. Acetylation is generally linked to gene activation. Acetylation on Lys-19 (H3K18ac) and Lys-24 (H3K24ac) favors methylation at Arg-18 (H3R17me). Acetylation at Lys-123 (H3K122ac) by EP300/p300 plays a central role in chromatin structure: localizes at the surface of the histone octamer and stimulates transcription, possibly by promoting nucleosome instability. Post-translationally, asymmetric dimethylation at Arg-18 (H3R17me2a) is linked to gene activation. Asymmetric dimethylation at Arg-3 (H3R2me2a) by PRMT6 is linked to gene repression and is mutually exclusive with H3 Lys-5 methylation (H3K4me2 and H3K4me3). H3R2me2a is present at the 3' of genes regardless of their transcription state and is enriched on inactive promoters, while it is absent on active promoters. In terms of processing, methylation at Lys-5 (H3K4me) and Lys-80 (H3K79me) are linked to gene activation. Methylation at Lys-5 (H3K4me) facilitates subsequent acetylation of H3 and H4. Methylation at Lys-80 (H3K79me) is associated with DNA double-strand break (DSB) responses and is a specific target for TP53BP1. Methylation at Lys-10 (H3K9me) and Lys-28 (H3K27me) are linked to gene repression. Methylation at Lys-10 (H3K9me) is a specific target for HP1 proteins (CBX1, CBX3 and CBX5) and prevents subsequent phosphorylation at Ser-11 (H3S10ph) and acetylation of H3 and H4. Methylation at Lys-5 (H3K4me) and Lys-80 (H3K79me) require preliminary monoubiquitination of H2B at 'Lys-120'. Phosphorylated at Thr-4 (H3T3ph) by HASPIN during prophase and dephosphorylated during anaphase. Phosphorylation at Ser-11 (H3S10ph) by AURKB is crucial for chromosome condensation and cell-cycle progression during mitosis and meiosis. In addition phosphorylation at Ser-11 (H3S10ph) by RPS6KA4 and RPS6KA5 is important during interphase because it enables the transcription of genes following external stimulation, like mitogens, stress, growth factors or UV irradiation and result in the activation of genes, such as c-fos and c-jun. Phosphorylation at Ser-11 (H3S10ph), which is linked to gene activation, prevents methylation at Lys-10 (H3K9me) but facilitates acetylation of H3 and H4. Phosphorylation at Ser-11 (H3S10ph) by AURKB mediates the dissociation of HP1 proteins (CBX1, CBX3 and CBX5) from heterochromatin. Phosphorylation at Ser-11 (H3S10ph) is also an essential regulatory mechanism for neoplastic cell transformation. Phosphorylated at Ser-29 (H3S28ph) by MAP3K20 isoform 1, RPS6KA5 or AURKB during mitosis or upon ultraviolet B irradiation. Phosphorylation at Thr-7 (H3T6ph) by PRKCB is a specific tag for epigenetic transcriptional activation that prevents demethylation of Lys-5 (H3K4me) by LSD1/KDM1A. At centromeres, specifically phosphorylated at Thr-12 (H3T11ph) from prophase to early anaphase, by DAPK3 and PKN1. Phosphorylation at Thr-12 (H3T11ph) by PKN1 or isoform M2 of PKM (PKM2) is a specific tag for epigenetic transcriptional activation that promotes demethylation of Lys-10 (H3K9me) by KDM4C/JMJD2C. Phosphorylation at Tyr-42 (H3Y41ph) by JAK2 promotes exclusion of CBX5 (HP1 alpha) from chromatin. Post-translationally, lysine deamination at Lys-5 (H3K4all) to form allysine only takes place on H3K4me3 and results in gene repression. In terms of processing, butyrylation of histones marks active promoters and competes with histone acetylation. It is present during late spermatogenesis. Succinylation at Lys-80 (H3K79succ) by KAT2A takes place with a maximum frequency around the transcription start sites of genes. It gives a specific tag for epigenetic transcription activation. Desuccinylation at Lys-123 (H3K122succ) by SIRT7 in response to DNA damage promotes chromatin condensation and double-strand breaks (DSBs) repair. Post-translationally, serine ADP-ribosylation constitutes the primary form of ADP-ribosylation of proteins in response to DNA damage. Serine ADP-ribosylation at Ser-11 (H3S10ADPr) is mutually exclusive with phosphorylation at Ser-11 (H3S10ph) and impairs acetylation at Lys-10 (H3K9ac).

Its subcellular location is the nucleus. The protein resides in the chromosome. Core component of nucleosome. Nucleosomes wrap and compact DNA into chromatin, limiting DNA accessibility to the cellular machineries which require DNA as a template. Histones thereby play a central role in transcription regulation, DNA repair, DNA replication and chromosomal stability. DNA accessibility is regulated via a complex set of post-translational modifications of histones, also called histone code, and nucleosome remodeling. The sequence is that of Histone H3.3C from Cairina moschata (Muscovy duck).